A 114-amino-acid chain; its full sequence is MKRPFAVSVTYPTRESAEESSCELVRRRLAACCQISEITSIYFWKEAIVKETEYKLIAKTFSSLFAGIQEFVAGSHPYEVPEITGMEMHLASRQYLEWMNSCVDDTGQAPNTRQ.

It belongs to the CutA family. Homotrimer.

The chain is Probable divalent-cation tolerance protein cutA homolog from Encephalitozoon cuniculi (strain GB-M1) (Microsporidian parasite).